The primary structure comprises 233 residues: Small ribosomal subunit protein uS3 (233 aa).

Residues 39–107 (VRKYLTKELE…PAQINIAEVR (69 aa)) enclose the KH type-2 domain.

This sequence belongs to the universal ribosomal protein uS3 family. As to quaternary structure, part of the 30S ribosomal subunit. Forms a tight complex with proteins S10 and S14.

In terms of biological role, binds the lower part of the 30S subunit head. Binds mRNA in the 70S ribosome, positioning it for translation. The sequence is that of Small ribosomal subunit protein uS3 from Pectobacterium carotovorum subsp. carotovorum (strain PC1).